A 24-amino-acid polypeptide reads, in one-letter code: Defensin D6 (24 aa).

The protein belongs to the DEFL family. Group IV subfamily. Distributed in the epidermal cell layer of leaves and in the subepidermal layer region of stems. Not in roots.

It localises to the secreted. The protein localises to the cell wall. In terms of biological role, antimicrobial peptide. Active against Fusarium spp., Gram-positive and Gram-negative bacterial pathogens. This chain is Defensin D6, found in Spinacia oleracea (Spinach).